Here is a 360-residue protein sequence, read N- to C-terminus: Phospho-N-acetylmuramoyl-pentapeptide-transferase (360 aa).

The next 10 membrane-spanning stretches (helical) occupy residues 25-45 (TGGA…WIID), 71-91 (TPTM…VLWA), 94-114 (LNPY…VGFY), 129-148 (SGRT…CYAL), 168-188 (TAIY…VGAG), 199-219 (GLAI…SYLA), 239-259 (LAVL…FNAP), 263-283 (IFMG…IAVA), 288-308 (FVLA…IVQV), and 337-357 (QIVI…LSTL).

It belongs to the glycosyltransferase 4 family. MraY subfamily. The cofactor is Mg(2+).

It localises to the cell inner membrane. It catalyses the reaction UDP-N-acetyl-alpha-D-muramoyl-L-alanyl-gamma-D-glutamyl-meso-2,6-diaminopimeloyl-D-alanyl-D-alanine + di-trans,octa-cis-undecaprenyl phosphate = di-trans,octa-cis-undecaprenyl diphospho-N-acetyl-alpha-D-muramoyl-L-alanyl-D-glutamyl-meso-2,6-diaminopimeloyl-D-alanyl-D-alanine + UMP. The protein operates within cell wall biogenesis; peptidoglycan biosynthesis. Its function is as follows. Catalyzes the initial step of the lipid cycle reactions in the biosynthesis of the cell wall peptidoglycan: transfers peptidoglycan precursor phospho-MurNAc-pentapeptide from UDP-MurNAc-pentapeptide onto the lipid carrier undecaprenyl phosphate, yielding undecaprenyl-pyrophosphoryl-MurNAc-pentapeptide, known as lipid I. This chain is Phospho-N-acetylmuramoyl-pentapeptide-transferase, found in Rhodopseudomonas palustris (strain BisA53).